A 197-amino-acid chain; its full sequence is Phosphoheptose isomerase (197 aa).

Residues 37 to 197 (MLQCLMNDGK…CIDSVLLEGM (161 aa)) form the SIS domain. Residue 52-54 (NGG) participates in substrate binding. Positions 61 and 65 each coordinate Zn(2+). Substrate-binding positions include Glu65, 94-95 (ND), 120-122 (STS), Ser125, and Gln175. Residues Gln175 and His183 each contribute to the Zn(2+) site.

This sequence belongs to the SIS family. GmhA subfamily. In terms of assembly, homotetramer. Zn(2+) serves as cofactor.

It localises to the cytoplasm. It catalyses the reaction 2 D-sedoheptulose 7-phosphate = D-glycero-alpha-D-manno-heptose 7-phosphate + D-glycero-beta-D-manno-heptose 7-phosphate. Its pathway is carbohydrate biosynthesis; D-glycero-D-manno-heptose 7-phosphate biosynthesis; D-glycero-alpha-D-manno-heptose 7-phosphate and D-glycero-beta-D-manno-heptose 7-phosphate from sedoheptulose 7-phosphate: step 1/1. It functions in the pathway bacterial outer membrane biogenesis; LOS core biosynthesis. Catalyzes the isomerization of sedoheptulose 7-phosphate in D-glycero-D-manno-heptose 7-phosphate. The polypeptide is Phosphoheptose isomerase (Neisseria meningitidis serogroup A / serotype 4A (strain DSM 15465 / Z2491)).